The chain runs to 388 residues: Mitochondrial distribution and morphology protein 12 (388 aa).

One can recognise an SMP-LTD domain in the interval 1-388 (MSLDINWSLL…VFPNFHTVAL (388 aa)). Disordered stretches follow at residues 75-101 (DDEG…RNEA) and 209-251 (PMSI…SSSS). The segment covering 83-101 (EEKQREKEREERDKLRNEA) has biased composition (basic and acidic residues). Residues 234 to 243 (PSPPAHPAGL) show a composition bias toward pro residues.

This sequence belongs to the MDM12 family. In terms of assembly, component of the ER-mitochondria encounter structure (ERMES) or MDM complex, composed of MMM1, MDM10, MDM12 and MDM34. An MMM1 homodimer associates with one molecule of MDM12 on each side in a pairwise head-to-tail manner, and the SMP-LTD domains of MMM1 and MDM12 generate a continuous hydrophobic tunnel for phospholipid trafficking.

Its subcellular location is the mitochondrion outer membrane. The protein localises to the endoplasmic reticulum membrane. Functionally, component of the ERMES/MDM complex, which serves as a molecular tether to connect the endoplasmic reticulum (ER) and mitochondria. Components of this complex are involved in the control of mitochondrial shape and protein biogenesis, and function in nonvesicular lipid trafficking between the ER and mitochondria. MDM12 is required for the interaction of the ER-resident membrane protein MMM1 and the outer mitochondrial membrane-resident beta-barrel protein MDM10. The MDM12-MMM1 subcomplex functions in the major beta-barrel assembly pathway that is responsible for biogenesis of all mitochondrial outer membrane beta-barrel proteins, and acts in a late step after the SAM complex. The MDM10-MDM12-MMM1 subcomplex further acts in the TOM40-specific pathway after the action of the MDM12-MMM1 complex. Essential for establishing and maintaining the structure of mitochondria and maintenance of mtDNA nucleoids. This is Mitochondrial distribution and morphology protein 12 from Cryptococcus neoformans var. neoformans serotype D (strain B-3501A) (Filobasidiella neoformans).